A 317-amino-acid chain; its full sequence is Chitin synthase export chaperone (317 aa).

Helical transmembrane passes span 63–83 (IFEI…IIII), 101–121 (FFQT…GVSA), 133–153 (VQLG…LLGF), 164–184 (MLLL…VSIV), 204–224 (FTVM…CLLI), 236–256 (TGAI…IYAF), and 266–286 (HYLD…MMLY).

The protein belongs to the CHS7 family. Interacts with CHS3.

Its subcellular location is the endoplasmic reticulum membrane. Its function is as follows. Chaperone required for the export of the chitin synthase CHS3 from the endoplasmic reticulum. The sequence is that of Chitin synthase export chaperone (CHS7) from Kluyveromyces lactis (strain ATCC 8585 / CBS 2359 / DSM 70799 / NBRC 1267 / NRRL Y-1140 / WM37) (Yeast).